The following is a 487-amino-acid chain: NGFI-A-binding protein 1 (487 aa).

The interval 4–82 is NCD1; the sequence is ALPRTLGELQ…RDWVTNPGLF (79 aa). Glycyl lysine isopeptide (Lys-Gly) (interchain with G-Cter in SUMO2) cross-links involve residues Lys-126, Lys-129, and Lys-143. The segment at 162 to 188 is disordered; that stretch reads QGHHATESEHSLSPADLGSPASPKESS. A phosphoserine mark is found at Ser-172 and Ser-183. Residue Lys-212 forms a Glycyl lysine isopeptide (Lys-Gly) (interchain with G-Cter in SUMO2) linkage. Positions 221–310 are NCD2; it reads LLKTNKKLAK…ARQISREVTY (90 aa). Residues 307-338 form a necessary for nuclear localization region; that stretch reads EVTYKYTYRTTKSKCGERDELSPKRIKVEDGF. Ser-328 is modified (phosphoserine). Lys-333 participates in a covalent cross-link: Glycyl lysine isopeptide (Lys-Gly) (interchain with G-Cter in SUMO1); alternate. Residue Lys-333 forms a Glycyl lysine isopeptide (Lys-Gly) (interchain with G-Cter in SUMO2); alternate linkage. Residues Lys-355, Lys-369, and Lys-373 each participate in a glycyl lysine isopeptide (Lys-Gly) (interchain with G-Cter in SUMO2) cross-link. The segment at 399-434 is disordered; sequence YRQSSEEHSPNGLTSDNSDGQGERPLNLRMPNLQNR. Ser-407 bears the Phosphoserine mark. A compositionally biased stretch (polar residues) spans 409 to 418; sequence NGLTSDNSDG. Glycyl lysine isopeptide (Lys-Gly) (interchain with G-Cter in SUMO2) cross-links involve residues Lys-454, Lys-465, and Lys-477. Lys-480 is covalently cross-linked (Glycyl lysine isopeptide (Lys-Gly) (interchain with G-Cter in SUMO1); alternate). A Glycyl lysine isopeptide (Lys-Gly) (interchain with G-Cter in SUMO2); alternate cross-link involves residue Lys-480.

Belongs to the NAB family. Homomultimers may associate with EGR1 bound to DNA. Isoform Short is found in myeloid leukemia cell line KG-1.

The protein resides in the nucleus. In terms of biological role, acts as a transcriptional repressor for zinc finger transcription factors EGR1 and EGR2. This is NGFI-A-binding protein 1 (NAB1) from Homo sapiens (Human).